The chain runs to 850 residues: Bifunctional uridylyltransferase/uridylyl-removing enzyme (850 aa).

Positions 1–317 (MSARPFADLR…LFPVVAPPLP (317 aa)) are uridylyltransferase. The interval 318 to 673 (IDDDFQLRAG…ARLSPAGEGI (356 aa)) is uridylyl-removing. In terms of domain architecture, HD spans 436–558 (VDEHILTVLR…VGDTRRLDAL (123 aa)). 2 ACT domains span residues 674 to 755 (QVMV…AVQP) and 783 to 850 (VLSI…GVLG).

This sequence belongs to the GlnD family. Mg(2+) serves as cofactor.

The catalysed reaction is [protein-PII]-L-tyrosine + UTP = [protein-PII]-uridylyl-L-tyrosine + diphosphate. The enzyme catalyses [protein-PII]-uridylyl-L-tyrosine + H2O = [protein-PII]-L-tyrosine + UMP + H(+). With respect to regulation, uridylyltransferase (UTase) activity is inhibited by glutamine, while glutamine activates uridylyl-removing (UR) activity. Modifies, by uridylylation and deuridylylation, the PII regulatory proteins (GlnB and homologs), in response to the nitrogen status of the cell that GlnD senses through the glutamine level. Under low glutamine levels, catalyzes the conversion of the PII proteins and UTP to PII-UMP and PPi, while under higher glutamine levels, GlnD hydrolyzes PII-UMP to PII and UMP (deuridylylation). Thus, controls uridylylation state and activity of the PII proteins, and plays an important role in the regulation of nitrogen assimilation and metabolism. In Thiobacillus denitrificans (strain ATCC 25259 / T1), this protein is Bifunctional uridylyltransferase/uridylyl-removing enzyme.